The following is an 818-amino-acid chain: Hillarin (818 aa).

The 68-residue stretch at 9-76 (STCLRCSETV…SSHVPKSGPG (68 aa)) folds into the LIM zinc-binding domain. A disordered region spans residues 97–141 (FVNEQIRGTRSEVDGGPLGGSRQSTPNGYGSREISSPSQNDSDYK). A compositionally biased stretch (polar residues) spans 117 to 137 (SRQSTPNGYGSREISSPSQND). Residues 216 to 272 (QDEWERELQRLTHKFEKELATSRRSRDEANILTMRHEQQKEDLEKNMTLRRSKKKES) adopt a coiled-coil conformation.

This sequence belongs to the transglutaminase-like superfamily. Interacts with pnut. In terms of tissue distribution, localizes to the neuropil of the embryonic central nervous system (at protein level). Also detected in third instar larval brain (at protein level).

The protein resides in the cytoplasm. It is found in the cell cortex. Its subcellular location is the cleavage furrow. May act as a modulator of septin function during cytokinesis in the developing nervous system. The chain is Hillarin from Drosophila melanogaster (Fruit fly).